The primary structure comprises 68 residues: Protein SlyX homolog (68 aa).

Belongs to the SlyX family.

The protein is Protein SlyX homolog of Pseudomonas putida (strain GB-1).